The following is a 370-amino-acid chain: Death-associated protein kinase 2 (370 aa).

A Protein kinase domain is found at 23-285; the sequence is YDIGEELGSG…IQEALRHPWI (263 aa). Residues 29–37 and K52 contribute to the ATP site; that span reads LGSGQFAIV. Catalysis depends on D149, which acts as the Proton acceptor. Residues 287–354 form a calmodulin-binding region; sequence PVDTQQAMVR…RNCESDTEEN (68 aa). The tract at residues 292–301 is autoinhibitory domain; sequence QAMVRRESVV. A Phosphoserine modification is found at S299. S318 carries the post-translational modification Phosphoserine; by autocatalysis. Residue S349 is modified to Phosphoserine. The residue at position 369 (T369) is a Phosphothreonine.

This sequence belongs to the protein kinase superfamily. CAMK Ser/Thr protein kinase family. DAP kinase subfamily. As to quaternary structure, homodimer in its autoinhibited state. Active as monomer. Interacts with 14-3-3 proteins YWHAB, YWHAE, YWHAG, YWHAH, YWHAQ, YWHAZ and SFN; the interaction requires DAPK2 phosphorylation at Thr-369 and suppresses DAPK2 kinase activity and DAPK2-induced apoptosis. It depends on Mg(2+) as a cofactor. Post-translationally, autophosphorylation at Ser-318 inhibits its catalytic activity. Dephosphorylated at Ser-318 in response to activated Fas and TNF-alpha receptors. In terms of tissue distribution, expressed in peritubular interstitial cells of the renal cortex. Isoform 1 is found in the adult brain while isoform 2 is expressed in brains of embryos and young mice (at protein level).

The protein localises to the cytoplasm. It is found in the cytoplasmic vesicle. It localises to the autophagosome lumen. It catalyses the reaction L-seryl-[protein] + ATP = O-phospho-L-seryl-[protein] + ADP + H(+). The catalysed reaction is L-threonyl-[protein] + ATP = O-phospho-L-threonyl-[protein] + ADP + H(+). Its activity is regulated as follows. Activated by Ca(2+)/calmodulin. Regulated by a double locking mechanism, involving autophosphorylation at Ser-318, calmodulin binding, and dimerization. In the inactive state, Ser-318 is phosphorylated, and the kinase is dimeric. Activation involves: dephosphorylation at Ser-318, release-of-autoinhibition mechanism where calmodulin binding induces a conformational change that relieves the steric block of the active site by the autoinhibitory domain, and generation of the monomeric active form of the kinase. Its function is as follows. Calcium/calmodulin-dependent serine/threonine kinase involved in multiple cellular signaling pathways that trigger cell survival, apoptosis, and autophagy. Capable of regulating both type I apoptotic and type II autophagic cell death signals. The former involves caspase activation, chromatin and mitochondrial condensation while the latter involves caspase-independent cell death in conjunction with accumulation of mature autophagic vesicles, plasma membrane blebs, and nuclear condensation without DNA degradation. Mediator of anoikis and a suppressor of beta-catenin-dependent anchorage-independent growth of malignant epithelial cells. May play a role in granulocytic maturation. Regulates granulocytes motility by controlling cell spreading and polarization. This Mus musculus (Mouse) protein is Death-associated protein kinase 2 (Dapk2).